A 462-amino-acid polypeptide reads, in one-letter code: L-seryl-tRNA(Sec) selenium transferase (462 aa).

At Lys292 the chain carries N6-(pyridoxal phosphate)lysine.

The protein belongs to the SelA family. Pyridoxal 5'-phosphate serves as cofactor.

It localises to the cytoplasm. The enzyme catalyses L-seryl-tRNA(Sec) + selenophosphate + H(+) = L-selenocysteinyl-tRNA(Sec) + phosphate. It functions in the pathway aminoacyl-tRNA biosynthesis; selenocysteinyl-tRNA(Sec) biosynthesis; selenocysteinyl-tRNA(Sec) from L-seryl-tRNA(Sec) (bacterial route): step 1/1. Functionally, converts seryl-tRNA(Sec) to selenocysteinyl-tRNA(Sec) required for selenoprotein biosynthesis. The sequence is that of L-seryl-tRNA(Sec) selenium transferase from Geotalea uraniireducens (strain Rf4) (Geobacter uraniireducens).